Here is a 68-residue protein sequence, read N- to C-terminus: uncharacterized protein (68 aa).

The first 15 residues, 1-15 (MTIIFLICLDASTQS), serve as a signal peptide directing secretion. The disordered stretch occupies residues 14-68 (QSTTNNSINNNNNNNNNNNNNNNNNNNNNNNNNNNNNNNNNNNNNNSKVFDFNIF). N-linked (GlcNAc...) asparagine glycans are attached at residues Asn-18 and Asn-58. Residues 22–59 (NNNNNNNNNNNNNNNNNNNNNNNNNNNNNNNNNNNNNN) show a composition bias toward low complexity.

It is found in the secreted. This is an uncharacterized protein from Dictyostelium discoideum (Social amoeba).